A 213-amino-acid chain; its full sequence is Glycerol-3-phosphate acyltransferase (213 aa).

Helical transmembrane passes span 3-23, 54-76, 83-100, 110-130, 142-162, and 163-183; these read ILLLILIAYLLGSIQTGLWIG, TITFLVDMLKGTLAVLLPIWLGI, IIGFFAIIGHVFPFFTGF, AGVLLGFVPLYFVFLLLVFAL, SITAAVVGLITLATFPAIHFL, and LDGYDPIFSAVLIIIVLVIIF.

It belongs to the PlsY family. In terms of assembly, probably interacts with PlsX.

The protein resides in the cell membrane. The catalysed reaction is an acyl phosphate + sn-glycerol 3-phosphate = a 1-acyl-sn-glycero-3-phosphate + phosphate. It functions in the pathway lipid metabolism; phospholipid metabolism. In terms of biological role, catalyzes the transfer of an acyl group from acyl-phosphate (acyl-PO(4)) to glycerol-3-phosphate (G3P) to form lysophosphatidic acid (LPA). This enzyme utilizes acyl-phosphate as fatty acyl donor, but not acyl-CoA or acyl-ACP. This is Glycerol-3-phosphate acyltransferase from Streptococcus thermophilus (strain ATCC BAA-491 / LMD-9).